A 180-amino-acid chain; its full sequence is MSENSTPERVVLLDEQHQPTGTALKSEVHTEATPLHLAFSCHVLNPDGRVLVTRRALSKRTWPGVWSNSFCGHPGPHESFEDAIARRARQELGLEIRNLTVVVPEFQYRATDATGVVENEFCPVFVAVTDTDPQPAESEVAEYAWTAPRDLIAAVESAPYAFSPWLGDQVREPALREALG.

Mn(2+) is bound by residues His29 and His36. Residue Cys71 is part of the active site. His73 is a binding site for Mn(2+). Residue Glu91 coordinates Mg(2+). The Mn(2+) site is built by Glu118 and Glu120. Glu120 is a catalytic residue.

The protein belongs to the IPP isomerase type 1 family. Requires Mg(2+) as cofactor. It depends on Mn(2+) as a cofactor.

The protein localises to the cytoplasm. The enzyme catalyses isopentenyl diphosphate = dimethylallyl diphosphate. It participates in isoprenoid biosynthesis; dimethylallyl diphosphate biosynthesis; dimethylallyl diphosphate from isopentenyl diphosphate: step 1/1. Its function is as follows. Catalyzes the 1,3-allylic rearrangement of the homoallylic substrate isopentenyl (IPP) to its highly electrophilic allylic isomer, dimethylallyl diphosphate (DMAPP). The chain is Isopentenyl-diphosphate Delta-isomerase from Kocuria rhizophila (strain ATCC 9341 / DSM 348 / NBRC 103217 / DC2201).